Consider the following 88-residue polypeptide: UPF0250 protein Sbal_3280 (88 aa).

The protein belongs to the UPF0250 family.

The polypeptide is UPF0250 protein Sbal_3280 (Shewanella baltica (strain OS155 / ATCC BAA-1091)).